Reading from the N-terminus, the 119-residue chain is Protein FATTY ACID EXPORT 5 (119 aa).

A run of 3 helical transmembrane segments spans residues Ser27–Ile47, Thr57–Gly77, and Lys85–Tyr105.

It belongs to the TMEM14 family.

Its subcellular location is the membrane. May be involved in free fatty acids export. The sequence is that of Protein FATTY ACID EXPORT 5 from Arabidopsis thaliana (Mouse-ear cress).